A 593-amino-acid polypeptide reads, in one-letter code: Probable metalloendopeptidase G1-type (593 aa).

A Zn(2+)-binding site is contributed by His-41. Glu-44 is an active-site residue. Residue His-45 coordinates Zn(2+).

This sequence belongs to the peptidase M44 family. It depends on Zn(2+) as a cofactor.

In terms of biological role, seems to be involved in viral proteins maturation by cleavage at Ala-Gly-|-Xaa motifs. In Homo sapiens (Human), this protein is Probable metalloendopeptidase G1-type.